A 349-amino-acid polypeptide reads, in one-letter code: Secondary metabolism regulator LAE1 (349 aa).

Positions 1-46 (MSSRNAPSGCVAPSPATAAPPSPTNLRLTVGQSGSESANEPGGEPE) are disordered. The span at 25 to 38 (NLRLTVGQSGSESA) shows a compositional bias: polar residues.

Belongs to the methyltransferase superfamily. LaeA methyltransferase family. In terms of assembly, component of the heterotrimeric velvet complex composed of LAE1, VEL1 and VEL2; VEL1 acting as a bridging protein between LAE1 and VEL2.

Its subcellular location is the nucleus. The enzyme catalyses L-methionyl-[protein] + S-adenosyl-L-methionine = S-methyl-L-methionyl-[protein] + S-adenosyl-L-homocysteine. Methyltransferase that performs automethylation. No other methyl-accepting substrate has been identified yet. Component of the velvet transcription factor complex that acts as a global regulator for secondary metabolite gene expression. Controls the expression of the gamma-pentyl-pyrone gene clusters. Required for the expression of cellulase. Regulates asexual sporulation (conidiation) by environmental stimuli such as light and/or mechanical injury. Required for oxidative stress tolerance. Also plays a role in defense and parasitism on other fungi. In Hypocrea atroviridis (strain ATCC 20476 / IMI 206040) (Trichoderma atroviride), this protein is Secondary metabolism regulator LAE1.